A 165-amino-acid polypeptide reads, in one-letter code: Transcription elongation factor GreA (165 aa).

The stretch at Ala55–Lys78 forms a coiled coil.

Belongs to the GreA/GreB family.

In terms of biological role, necessary for efficient RNA polymerase transcription elongation past template-encoded arresting sites. The arresting sites in DNA have the property of trapping a certain fraction of elongating RNA polymerases that pass through, resulting in locked ternary complexes. Cleavage of the nascent transcript by cleavage factors such as GreA or GreB allows the resumption of elongation from the new 3'terminus. GreA releases sequences of 2 to 3 nucleotides. In Streptomyces avermitilis (strain ATCC 31267 / DSM 46492 / JCM 5070 / NBRC 14893 / NCIMB 12804 / NRRL 8165 / MA-4680), this protein is Transcription elongation factor GreA.